The following is a 352-amino-acid chain: Glycerol-1-phosphate dehydrogenase [NAD(P)+] (352 aa).

Residues 98 to 102 and 120 to 123 each bind NAD(+); these read GKPID and TAAS. Asp-125 contributes to the substrate binding site. Ser-129 lines the NAD(+) pocket. Asp-172 serves as a coordination point for substrate. The Zn(2+) site is built by Asp-172 and His-252. His-256 provides a ligand contact to substrate. His-268 contributes to the Zn(2+) binding site.

It belongs to the glycerol-1-phosphate dehydrogenase family. Zn(2+) serves as cofactor.

Its subcellular location is the cytoplasm. It carries out the reaction sn-glycerol 1-phosphate + NAD(+) = dihydroxyacetone phosphate + NADH + H(+). It catalyses the reaction sn-glycerol 1-phosphate + NADP(+) = dihydroxyacetone phosphate + NADPH + H(+). It functions in the pathway membrane lipid metabolism; glycerophospholipid metabolism. Catalyzes the NAD(P)H-dependent reduction of dihydroxyacetonephosphate (DHAP or glycerone phosphate) to glycerol 1-phosphate (G1P). The G1P thus generated is used as the glycerophosphate backbone of phospholipids in the cellular membranes of Archaea. In Natronomonas pharaonis (strain ATCC 35678 / DSM 2160 / CIP 103997 / JCM 8858 / NBRC 14720 / NCIMB 2260 / Gabara) (Halobacterium pharaonis), this protein is Glycerol-1-phosphate dehydrogenase [NAD(P)+].